A 338-amino-acid chain; its full sequence is Ferredoxin--NADP reductase (338 aa).

FAD contacts are provided by aspartate 35, glutamine 43, tyrosine 48, alanine 88, phenylalanine 122, aspartate 289, and threonine 330.

It belongs to the ferredoxin--NADP reductase type 2 family. As to quaternary structure, homodimer. The cofactor is FAD.

It carries out the reaction 2 reduced [2Fe-2S]-[ferredoxin] + NADP(+) + H(+) = 2 oxidized [2Fe-2S]-[ferredoxin] + NADPH. In Ehrlichia chaffeensis (strain ATCC CRL-10679 / Arkansas), this protein is Ferredoxin--NADP reductase.